The chain runs to 263 residues: Acyl-[acyl-carrier-protein]--UDP-N-acetylglucosamine O-acyltransferase (263 aa).

Belongs to the transferase hexapeptide repeat family. LpxA subfamily. Homotrimer.

The protein resides in the cytoplasm. The enzyme catalyses a (3R)-hydroxyacyl-[ACP] + UDP-N-acetyl-alpha-D-glucosamine = a UDP-3-O-[(3R)-3-hydroxyacyl]-N-acetyl-alpha-D-glucosamine + holo-[ACP]. It participates in glycolipid biosynthesis; lipid IV(A) biosynthesis; lipid IV(A) from (3R)-3-hydroxytetradecanoyl-[acyl-carrier-protein] and UDP-N-acetyl-alpha-D-glucosamine: step 1/6. In terms of biological role, involved in the biosynthesis of lipid A, a phosphorylated glycolipid that anchors the lipopolysaccharide to the outer membrane of the cell. This is Acyl-[acyl-carrier-protein]--UDP-N-acetylglucosamine O-acyltransferase from Campylobacter jejuni subsp. jejuni serotype O:6 (strain 81116 / NCTC 11828).